The primary structure comprises 295 residues: N-acetylmuramic acid 6-phosphate etherase (295 aa).

In terms of domain architecture, SIS spans 53–216 (AIQRFNNGGR…STMTMIGVGK (164 aa)). Residue Glu-81 is the Proton donor of the active site. Residue Glu-112 is part of the active site.

The protein belongs to the GCKR-like family. MurNAc-6-P etherase subfamily. Homodimer.

It carries out the reaction N-acetyl-D-muramate 6-phosphate + H2O = N-acetyl-D-glucosamine 6-phosphate + (R)-lactate. Its pathway is amino-sugar metabolism; N-acetylmuramate degradation. Functionally, specifically catalyzes the cleavage of the D-lactyl ether substituent of MurNAc 6-phosphate, producing GlcNAc 6-phosphate and D-lactate. The polypeptide is N-acetylmuramic acid 6-phosphate etherase (Staphylococcus epidermidis (strain ATCC 35984 / DSM 28319 / BCRC 17069 / CCUG 31568 / BM 3577 / RP62A)).